The sequence spans 287 residues: Acetylglutamate kinase (287 aa).

Residues 64–65, arginine 86, and asparagine 185 contribute to the substrate site; that span reads GG.

Belongs to the acetylglutamate kinase family. ArgB subfamily.

The protein resides in the cytoplasm. It carries out the reaction N-acetyl-L-glutamate + ATP = N-acetyl-L-glutamyl 5-phosphate + ADP. It functions in the pathway amino-acid biosynthesis; L-arginine biosynthesis; N(2)-acetyl-L-ornithine from L-glutamate: step 2/4. Catalyzes the ATP-dependent phosphorylation of N-acetyl-L-glutamate. The chain is Acetylglutamate kinase from Hydrogenobaculum sp. (strain Y04AAS1).